Reading from the N-terminus, the 396-residue chain is Probable peptidoglycan glycosyltransferase FtsW (396 aa).

Residues 1-27 (MPFLDKVKQQYEDWTRITPSNLLYDRA) lie on the Cytoplasmic side of the membrane. Residues 28–48 (LLLLFFVLLLIGLLAVSSASI) traverse the membrane as a helical segment. At 49-64 (PVGTRLFKDPFYFAKR) the chain is on the periplasmic side. The chain crosses the membrane as a helical span at residues 65–85 (DAIYVFLSCVTCYLCVQVPME). Residues 86-93 (KWEQWHVR) are Cytoplasmic-facing. A helical membrane pass occupies residues 94–114 (LFAFAIFLLILVLIPGIGLSV). At 115–122 (NGARRWIP) the chain is on the periplasmic side. Residues 123-143 (MVLFNFQPAEFAKLALTCFLA) form a helical membrane-spanning segment. Residues 144-157 (SYFTRKYDEVRSRK) are Cytoplasmic-facing. Residues 158–178 (LSAFKPFALMGLMGLFLLSQP) traverse the membrane as a helical segment. The Periplasmic portion of the chain corresponds to 179–183 (DLGST). Transmembrane regions (helical) follow at residues 184–204 (VVLFVITFGLLFIVGANFWQF) and 205–225 (VGLMAFGGLLFVWLVLSSAYR). The Periplasmic portion of the chain corresponds to 226–285 (LKRFTGFLDPFKDPYGTGFQLSNSLMAFGRGEWVGEGLGNSIQKLEYLPEAHTDFVMAVV). The helical transmembrane segment at 286 to 306 (GEEFGFLGILVIVILLGLLIF) threads the bilayer. Residues 307–323 (RAMKIGRESLLLEQRFK) lie on the Cytoplasmic side of the membrane. Residues 324 to 344 (GFFAFGISFWIFFQGFVNLGM) form a helical membrane-spanning segment. At 345–355 (SLGLLPTKGLT) the chain is on the periplasmic side. A helical membrane pass occupies residues 356–376 (FPLISYGGSSLIIMSMTIGLL). At 377–396 (LRIDHENRLMRIGQARLRDD) the chain is on the cytoplasmic side.

The protein belongs to the SEDS family. FtsW subfamily.

It is found in the cell inner membrane. It catalyses the reaction [GlcNAc-(1-&gt;4)-Mur2Ac(oyl-L-Ala-gamma-D-Glu-L-Lys-D-Ala-D-Ala)](n)-di-trans,octa-cis-undecaprenyl diphosphate + beta-D-GlcNAc-(1-&gt;4)-Mur2Ac(oyl-L-Ala-gamma-D-Glu-L-Lys-D-Ala-D-Ala)-di-trans,octa-cis-undecaprenyl diphosphate = [GlcNAc-(1-&gt;4)-Mur2Ac(oyl-L-Ala-gamma-D-Glu-L-Lys-D-Ala-D-Ala)](n+1)-di-trans,octa-cis-undecaprenyl diphosphate + di-trans,octa-cis-undecaprenyl diphosphate + H(+). It functions in the pathway cell wall biogenesis; peptidoglycan biosynthesis. Functionally, peptidoglycan polymerase that is essential for cell division. In Pasteurella multocida (strain Pm70), this protein is Probable peptidoglycan glycosyltransferase FtsW.